Here is a 378-residue protein sequence, read N- to C-terminus: N-acetyldiaminopimelate deacetylase (378 aa).

Aspartate 72 is a catalytic residue. Glutamate 131 acts as the Proton acceptor in catalysis.

It belongs to the peptidase M20A family. N-acetyldiaminopimelate deacetylase subfamily.

It carries out the reaction N-acetyl-(2S,6S)-2,6-diaminopimelate + H2O = (2S,6S)-2,6-diaminopimelate + acetate. The protein operates within amino-acid biosynthesis; L-lysine biosynthesis via DAP pathway; LL-2,6-diaminopimelate from (S)-tetrahydrodipicolinate (acetylase route): step 3/3. Catalyzes the conversion of N-acetyl-diaminopimelate to diaminopimelate and acetate. This chain is N-acetyldiaminopimelate deacetylase, found in Enterococcus faecalis (strain ATCC 700802 / V583).